The chain runs to 616 residues: Dihydroxy-acid dehydratase (616 aa).

Aspartate 81 lines the Mg(2+) pocket. Cysteine 122 contributes to the [2Fe-2S] cluster binding site. Positions 123 and 124 each coordinate Mg(2+). N6-carboxylysine is present on lysine 124. Cysteine 195 is a [2Fe-2S] cluster binding site. Position 491 (glutamate 491) interacts with Mg(2+). Serine 517 (proton acceptor) is an active-site residue.

The protein belongs to the IlvD/Edd family. In terms of assembly, homodimer. It depends on [2Fe-2S] cluster as a cofactor. Mg(2+) is required as a cofactor.

The catalysed reaction is (2R)-2,3-dihydroxy-3-methylbutanoate = 3-methyl-2-oxobutanoate + H2O. It carries out the reaction (2R,3R)-2,3-dihydroxy-3-methylpentanoate = (S)-3-methyl-2-oxopentanoate + H2O. It participates in amino-acid biosynthesis; L-isoleucine biosynthesis; L-isoleucine from 2-oxobutanoate: step 3/4. The protein operates within amino-acid biosynthesis; L-valine biosynthesis; L-valine from pyruvate: step 3/4. In terms of biological role, functions in the biosynthesis of branched-chain amino acids. Catalyzes the dehydration of (2R,3R)-2,3-dihydroxy-3-methylpentanoate (2,3-dihydroxy-3-methylvalerate) into 2-oxo-3-methylpentanoate (2-oxo-3-methylvalerate) and of (2R)-2,3-dihydroxy-3-methylbutanoate (2,3-dihydroxyisovalerate) into 2-oxo-3-methylbutanoate (2-oxoisovalerate), the penultimate precursor to L-isoleucine and L-valine, respectively. The protein is Dihydroxy-acid dehydratase of Shigella boydii serotype 4 (strain Sb227).